The sequence spans 387 residues: 23S rRNA (uracil(747)-C(5))-methyltransferase RlmC (387 aa).

[4Fe-4S] cluster is bound by residues C3, C11, C14, and C86. Residues Q211, F240, E269, and N319 each coordinate S-adenosyl-L-methionine. C346 (nucleophile) is an active-site residue.

This sequence belongs to the class I-like SAM-binding methyltransferase superfamily. RNA M5U methyltransferase family. RlmC subfamily.

It carries out the reaction uridine(747) in 23S rRNA + S-adenosyl-L-methionine = 5-methyluridine(747) in 23S rRNA + S-adenosyl-L-homocysteine + H(+). In terms of biological role, catalyzes the formation of 5-methyl-uridine at position 747 (m5U747) in 23S rRNA. This Pasteurella multocida (strain Pm70) protein is 23S rRNA (uracil(747)-C(5))-methyltransferase RlmC.